A 541-amino-acid polypeptide reads, in one-letter code: Formimidoyltransferase-cyclodeaminase (541 aa).

The tract at residues 1–181 is formiminotransferase N-subdomain; that stretch reads MSQLVECVPN…GATVTGARKF (181 aa). His82 functions as the For formimidoyltransferase activity in the catalytic mechanism. Residue 163–172 participates in folate binding; the sequence is GPSSFVPSWG. The formiminotransferase C-subdomain stretch occupies residues 182 to 326; it reads LIAFNINLLS…PKERIIEYLV (145 aa). Residues 327-334 form a linker region; the sequence is PDSGPEQS. The interval 335 to 541 is cyclodeaminase/cyclohydrolase; it reads LLDASLRAFV…VLGSLEARKE (207 aa). Asp412 (for cyclodeaminase activity) is an active-site residue. The residue at position 520 (Ser520) is a Phosphoserine.

This sequence in the C-terminal section; belongs to the cyclodeaminase/cyclohydrolase family. The protein in the N-terminal section; belongs to the formiminotransferase family. In terms of assembly, homooctamer, including four polyglutamate binding sites. The subunits are arranged as a tetramer of dimers, and form a planar ring-shaped structure. As to expression, specifically expressed in liver (at protein level).

Its subcellular location is the cytoplasm. It is found in the cytosol. It localises to the golgi apparatus. The protein localises to the cytoskeleton. The protein resides in the microtubule organizing center. Its subcellular location is the centrosome. It is found in the centriole. The catalysed reaction is 5-formimidoyltetrahydrofolate + L-glutamate = N-formimidoyl-L-glutamate + (6S)-5,6,7,8-tetrahydrofolate. It catalyses the reaction 5-formimidoyltetrahydrofolate + 2 H(+) = (6R)-5,10-methenyltetrahydrofolate + NH4(+). It participates in amino-acid degradation; L-histidine degradation into L-glutamate; L-glutamate from N-formimidoyl-L-glutamate (transferase route): step 1/1. In terms of biological role, folate-dependent enzyme, that displays both transferase and deaminase activity. Serves to channel one-carbon units from formiminoglutamate to the folate pool. Functionally, binds and promotes bundling of vimentin filaments originating from the Golgi. The polypeptide is Formimidoyltransferase-cyclodeaminase (Ftcd) (Rattus norvegicus (Rat)).